The chain runs to 385 residues: Cytochrome b (385 aa).

The next 4 membrane-spanning stretches (helical) occupy residues 32–52, 76–98, 113–133, and 179–199; these read MGSL…FMAM, WLLR…MHMA, VWII…LGYC, and FFAL…MHFM. Heme b-binding residues include His82 and His96. Residues His183 and His197 each coordinate heme b. An a ubiquinone-binding site is contributed by His202. The next 4 helical transmembrane spans lie at 225–245, 289–309, 321–341, and 348–368; these read FIFK…LFVF, LLGV…PLTD, ISKL…VLGS, and FVQM…IFVP.

Belongs to the cytochrome b family. As to quaternary structure, fungal cytochrome b-c1 complex contains 10 subunits; 3 respiratory subunits, 2 core proteins and 5 low-molecular weight proteins. Cytochrome b-c1 complex is a homodimer. Requires heme b as cofactor.

It localises to the mitochondrion inner membrane. Functionally, component of the ubiquinol-cytochrome c reductase complex (complex III or cytochrome b-c1 complex) that is part of the mitochondrial respiratory chain. The b-c1 complex mediates electron transfer from ubiquinol to cytochrome c. Contributes to the generation of a proton gradient across the mitochondrial membrane that is then used for ATP synthesis. The protein is Cytochrome b (COB) of Monosporozyma servazzii (Yeast).